The primary structure comprises 73 residues: Putative membrane protein insertion efficiency factor (73 aa).

Belongs to the UPF0161 family.

The protein resides in the cell inner membrane. Could be involved in insertion of integral membrane proteins into the membrane. This Neisseria meningitidis serogroup C / serotype 2a (strain ATCC 700532 / DSM 15464 / FAM18) protein is Putative membrane protein insertion efficiency factor.